The following is a 266-amino-acid chain: Large ribosomal subunit protein uL4 (266 aa).

Belongs to the universal ribosomal protein uL4 family. As to quaternary structure, part of the 50S ribosomal subunit.

Its function is as follows. One of the primary rRNA binding proteins, this protein initially binds near the 5'-end of the 23S rRNA. It is important during the early stages of 50S assembly. It makes multiple contacts with different domains of the 23S rRNA in the assembled 50S subunit and ribosome. Forms part of the polypeptide exit tunnel. The polypeptide is Large ribosomal subunit protein uL4 (Sulfurisphaera tokodaii (strain DSM 16993 / JCM 10545 / NBRC 100140 / 7) (Sulfolobus tokodaii)).